The chain runs to 318 residues: NF-kappa-B inhibitor alpha (318 aa).

Residues 1–44 (MLSAHRPAEPPAVEGCEPPRKERQGGLLPPDDRHDSGLDSMKEE) are disordered. The span at 17–44 (EPPRKERQGGLLPPDDRHDSGLDSMKEE) shows a compositional bias: basic and acidic residues. K21 is covalently cross-linked (Glycyl lysine isopeptide (Lys-Gly) (interchain with G-Cter in ubiquitin)). A Phosphoserine; by IKKA and IKKB modification is found at S36. The residue at position 40 (S40) is a Phosphoserine; by IKKA, IKKB and IKKE. Y46 is modified (phosphotyrosine; by Tyr-kinases). ANK repeat units follow at residues 114-143 (LSQT…DLDV), 147-176 (RGNT…PHHL), 186-215 (NGHT…DVNA), and 220-249 (NGRT…DVNK).

Belongs to the NF-kappa-B inhibitor family. Phosphorylated at Ser-36 and Ser-40 by IKKA/CHUK and IKKB/IKBKB; disables inhibition of NF-kappa-B DNA-binding activity. Phosphorylation at positions 36 and 40 is prerequisite to polyubiquitination and subsequent degradation. In terms of processing, monoubiquitinated at Lys-21 following phosphorylation at Ser-36 and Ser-40. The resulting polyubiquitination leads to protein degradation. Post-translationally, hydroxylated by HIF1AN. Highly expressed in lymph node, thymus followed by liver, brain, muscle, kidney, gastrointestinal and reproductive tract.

The protein localises to the cytoplasm. Its subcellular location is the nucleus. Functionally, inhibits the activity of dimeric NF-kappa-B/REL complexes by trapping REL (RELA/p65 and NFKB1/p50) dimers in the cytoplasm by masking their nuclear localization signals. On cellular stimulation by immune and pro-inflammatory responses, becomes phosphorylated promoting ubiquitination and degradation, enabling the dimeric RELA to translocate to the nucleus and activate transcription. The protein is NF-kappa-B inhibitor alpha (NFKBIA) of Gallus gallus (Chicken).